Here is a 272-residue protein sequence, read N- to C-terminus: Dermonecrotic toxin StSicTox-betaIC1 (272 aa).

Histidine 5 is an active-site residue. 2 residues coordinate Mg(2+): glutamate 25 and aspartate 27. The Nucleophile role is filled by histidine 41. Disulfide bonds link cysteine 45–cysteine 51 and cysteine 47–cysteine 191. Residue aspartate 85 coordinates Mg(2+).

The protein belongs to the arthropod phospholipase D family. Class II subfamily. Class IIb sub-subfamily. Mg(2+) is required as a cofactor. As to expression, expressed by the venom gland.

It is found in the secreted. The enzyme catalyses an N-(acyl)-sphingosylphosphocholine = an N-(acyl)-sphingosyl-1,3-cyclic phosphate + choline. It catalyses the reaction N-hexanoyl-sphing-4-enine-1-phosphocholine = N-(hexanoyl)-sphing-4-enine-1,3-cyclic phosphate + choline. It carries out the reaction an N-(acyl)-sphingosylphosphoethanolamine = an N-(acyl)-sphingosyl-1,3-cyclic phosphate + ethanolamine. The catalysed reaction is N-dodecanoyl-heptadecasphing-4-enine-1-phosphoethanolamine = N-dodecanoyl-heptadecasphing-4-enine-1,3-cyclic phosphate + ethanolamine. The enzyme catalyses a 1-acyl-sn-glycero-3-phosphoethanolamine = a 1-acyl-sn-glycero-2,3-cyclic phosphate + ethanolamine. It catalyses the reaction 1-tetradecanoyl-sn-glycero-3-phosphoethanolamine = 1-tetradecanoyl-sn-glycero-2,3-cyclic phosphate + ethanolamine. Dermonecrotic toxins cleave the phosphodiester linkage between the phosphate and headgroup of certain phospholipids (sphingolipid and lysolipid substrates), forming an alcohol (often choline) and a cyclic phosphate. This toxin acts on lysophosphatidylethanolamine (LPE) and ceramide phosphoethanolamine (CPE) with high activity. This toxin acts on sphingomyelin (SM) with very low activity and is not active on lysophosphatidylserine (LPS), lysophosphatidylcholine (LPC) and lysophosphatidylglycerol (LPG). It acts by transphosphatidylation, releasing exclusively cyclic phosphate as second products. It is not surprising that spider toxins have affinity for ethanolamine-containing sphingolipids since they are common in insect prey. Induces dermonecrosis, hemolysis, increased vascular permeability, edema, inflammatory response, and platelet aggregation. This chain is Dermonecrotic toxin StSicTox-betaIC1, found in Sicarius terrosus (Cave spider).